The following is a 268-amino-acid chain: Zinc finger protein SNAI2 (268 aa).

The tract at residues 1–20 (MPRSFLVKKHFNASKKPNYS) is SNAG domain. The tract at residues 80-117 (PASLGRVSPPPPSDTSSKDHSGSESPISDEEERLQSKL) is disordered. C2H2-type zinc fingers lie at residues 128 to 150 (FQCNLCNKTYSTFSGLGKHKQLH), 159 to 181 (FSCKYCDKEYVSLGALKMHIRTH), 185 to 207 (CVCKICGKAFSRPWLLQGHIRTH), and 213 to 235 (FSCSHCSRAFADRSNLRAHLQTH). The segment at 241 to 264 (YQCKSCSKTFSRMSLLHKHEESGC) adopts a C2H2-type 5; atypical zinc-finger fold.

The protein belongs to the snail C2H2-type zinc-finger protein family. In terms of assembly, interacts (via SNAG domain) with LIMD1 (via LIM domains), WTIP (via LIM domains) and AJUBA (via LIM domains). Interacts (via zinc fingers) with KPNA2, KPNB1, and TNPO1. May interact (via zinc fingers) with IPO7. Post-translationally, phosphorylated by GSK3B. Once phosphorylated, it becomes a target for ubiquitination. Ubiquitinated by the SCF(FBXO11) complex; ubiquitination requires previous GSK3B-mediated SNAI2 phosphorylation.

It localises to the nucleus. The protein resides in the cytoplasm. Transcriptional repressor that modulates both activator-dependent and basal transcription. Involved in the generation and migration of neural crest cells. Plays a role in mediating RAF1-induced transcriptional repression of the TJ protein, occludin (OCLN) and subsequent oncogenic transformation of epithelial cells. Represses BRCA2 expression by binding to its E2-box-containing silencer and recruiting CTBP1 and HDAC1 in breast cells. In epidermal keratinocytes, binds to the E-box in ITGA3 promoter and represses its transcription. Involved in the regulation of ITGB1 and ITGB4 expression and cell adhesion and proliferation in epidermal keratinocytes. Binds to E-box2 domain of BSG and activates its expression during TGFB1-induced epithelial-mesenchymal transition (EMT) in hepatocytes. Represses E-Cadherin/CDH1 transcription via E-box elements. Involved in osteoblast maturation. Binds to RUNX2 and SOC9 promoters and may act as a positive and negative transcription regulator, respectively, in osteoblasts. Binds to CXCL12 promoter via E-box regions in mesenchymal stem cells and osteoblasts. Plays an essential role in TWIST1-induced EMT and its ability to promote invasion and metastasis. This chain is Zinc finger protein SNAI2 (SNAI2), found in Bos taurus (Bovine).